Consider the following 818-residue polypeptide: Protein LDB19 (818 aa).

A disordered region spans residues 1–25 (MAFSRLTSTHQSNHNGYSNSNKKGQ). Phosphothreonine is present on threonine 93. The span at 352–361 (QVKIKESEKS) shows a compositional bias: basic and acidic residues. Positions 352–374 (QVKIKESEKSKKPRSHIKRYGEL) are disordered. Serine 384 bears the Phosphoserine mark. The segment at 388 to 436 (MPSQRLPGEPGREQAPNSSGPASTGNVGLDDENPVNEDEEDQPGSEFIH) is disordered. Polar residues predominate over residues 402–413 (APNSSGPASTGN). Positions 416–430 (LDDENPVNEDEEDQP) are enriched in acidic residues. Lysine 486 is covalently cross-linked (Glycyl lysine isopeptide (Lys-Gly) (interchain with G-Cter in ubiquitin)). Disordered stretches follow at residues 568–590 (QPIR…NVHN) and 607–644 (TPKV…NSNI). A Phosphothreonine modification is found at threonine 619. Residues 620–629 (PVNSNKSNHS) show a composition bias toward polar residues. Serine 808 bears the Phosphoserine mark.

The protein belongs to the LDB19 family.

It is found in the cytoplasm. Its subcellular location is the golgi apparatus. In terms of biological role, may be involved in protein-linked oligosaccharide phosphorylation since the deletion reduces the negative charge of the cell surface. Involved in the resistance to EDTA, cadmium chloride, cycloheximide, 6-dimethylaminopurine, methyl caffeate, beta-chloro-L-alanine, caffeine and cerulenin. This chain is Protein LDB19 (LDB19), found in Saccharomyces cerevisiae (strain ATCC 204508 / S288c) (Baker's yeast).